The primary structure comprises 2581 residues: Chromodomain-helicase-DNA-binding protein 8 (2581 aa).

Disordered regions lie at residues 22 to 114 (DDSF…QTST), 253 to 281 (VKGS…TPAQ), and 349 to 375 (QKIQ…PLTL). Composition is skewed to polar residues over residues 42–64 (SLDS…SSAS) and 94–114 (DYTT…QTST). Over residues 255–267 (GSAPAGNPGATGP) the composition is skewed to low complexity. The segment covering 355–370 (PQPPSSQPQPQPPPSA) has biased composition (pro residues). Ser-432 is modified (phosphoserine). Disordered stretches follow at residues 473–584 (RARG…KRKK) and 596–616 (DEEE…ILPE). Residues 493 to 516 (RPEEEGEKKRRKKSSGERLKEEKP) are compositionally biased toward basic and acidic residues. Residues Ser-553 and Ser-562 each carry the phosphoserine modification. The segment covering 572 to 584 (QKRRSNRQVKRKK) has biased composition (basic residues). A Glycyl lysine isopeptide (Lys-Gly) (interchain with G-Cter in SUMO) cross-link involves residue Lys-609. Chromo domains are found at residues 642–709 (AIVD…AQMR) and 724–790 (VEVD…RVNR). One can recognise a Helicase ATP-binding domain in the interval 823-997 (LFNWYNRQNC…FSLLHFLEPS (175 aa)). 836-843 (DEMGLGKT) contacts ATP. Residues 948–951 (DEAH) carry the DEAH box motif. The Helicase C-terminal domain occupies 1137–1288 (LIDKLLPKLK…KAVLQSMSGR (152 aa)). Residues Ser-1420 and Ser-1424 each carry the phosphoserine modification. Residues 1692 to 1713 (EDPEYKPLQGPPKDPDDEGDPL) form a disordered region. An interaction with FAM124B region spans residues 1789 to 2302 (IARREKQQRW…LVELEVECME (514 aa)). Phosphoserine is present on residues Ser-1976 and Ser-1978. The interval 1988–2016 (QCTSRTASPSPLRPDVPAEKSPEENAVQV) is disordered. Thr-1993 bears the Phosphothreonine mark. 3 positions are modified to phosphoserine: Ser-1995, Ser-1997, and Ser-2008. Lys-2025 is covalently cross-linked (Glycyl lysine isopeptide (Lys-Gly) (interchain with G-Cter in SUMO2)). 2 disordered regions span residues 2047–2118 (SSDT…YDEE) and 2179–2221 (NRRS…SSSA). Positions 2063–2072 (EDDDDSDSEL) are enriched in acidic residues. A phosphoserine mark is found at Ser-2068 and Ser-2070. Low complexity predominate over residues 2075-2094 (SKLSPSSSSSSSSSSSSSSS). Over residues 2102-2116 (EEKLTADRSRPKLYD) the composition is skewed to basic and acidic residues. 3 positions are modified to phosphoserine: Ser-2182, Ser-2200, and Ser-2202. Residue Thr-2204 is modified to Phosphothreonine. Position 2211 is a phosphoserine (Ser-2211). Thr-2215 carries the post-translational modification Phosphothreonine. Residue Ser-2223 is modified to Phosphoserine. Lys-2256 is covalently cross-linked (Glycyl lysine isopeptide (Lys-Gly) (interchain with G-Cter in SUMO2)). Residues 2484–2581 (PHVDSSTMLH…NSDSSDDADD (98 aa)) are disordered. Basic residues predominate over residues 2492–2510 (LHHHHHHPHPHHHHHHHPG). The segment covering 2513-2528 (TTGYPSSPATTTSGTA) has biased composition (low complexity). Position 2519 is a phosphoserine (Ser-2519). Positions 2537-2550 (EDDDEEEDEDDDDL) are enriched in acidic residues. Positions 2565–2574 (DDPMMPANSD) are enriched in low complexity.

The protein belongs to the SNF2/RAD54 helicase family. CHD8 subfamily. As to quaternary structure, interacts with p53/TP53, histone H1 and CTCF. Component of some MLL1/MLL complex, at least composed of the core components KMT2A/MLL1, ASH2L, HCFC1/HCF1, WDR5 and RBBP5, as well as the facultative components BACC1, CHD8, E2F6, HSP70, INO80C, KANSL1, LAS1L, MAX, MCRS1, MGA, KAT8/MOF, PELP1, PHF20, PRP31, RING2, RUVB1/TIP49A, RUVB2/TIP49B, SENP3, TAF1, TAF4, TAF6, TAF7, TAF9 and TEX10. Interacts with CHD7. Interacts with FAM124B. Interacts with CTNNB1. Interacts with PIAS3. Interacts with TLK2. Interacts with HNRNPL in an RNA-dependent manner. In terms of processing, sumoylated.

The protein resides in the nucleus. It catalyses the reaction ATP + H2O = ADP + phosphate + H(+). ATP-dependent chromatin-remodeling factor, it slides nucleosomes along DNA; nucleosome sliding requires ATP. Acts as a transcription repressor by remodeling chromatin structure and recruiting histone H1 to target genes. Suppresses p53/TP53-mediated apoptosis by recruiting histone H1 and preventing p53/TP53 transactivation activity. Acts as a negative regulator of Wnt signaling pathway by regulating beta-catenin (CTNNB1) activity. Negatively regulates CTNNB1-targeted gene expression by being recruited specifically to the promoter regions of several CTNNB1 responsive genes. Involved in both enhancer blocking and epigenetic remodeling at chromatin boundary via its interaction with CTCF. Acts as a suppressor of STAT3 activity by suppressing the LIF-induced STAT3 transcriptional activity. Also acts as a transcription activator via its interaction with ZNF143 by participating in efficient U6 RNA polymerase III transcription. Regulates alternative splicing of a core group of genes involved in neuronal differentiation, cell cycle and DNA repair. Enables H3K36me3-coupled transcription elongation and co-transcriptional RNA processing likely via interaction with HNRNPL. This chain is Chromodomain-helicase-DNA-binding protein 8, found in Rattus norvegicus (Rat).